Reading from the N-terminus, the 445-residue chain is tRNA-2-methylthio-N(6)-dimethylallyladenosine synthase (445 aa).

The MTTase N-terminal domain occupies 3–124 (KKLYIKTYGC…LPELISKVVR (122 aa)). Positions 12, 48, 87, 162, 166, and 169 each coordinate [4Fe-4S] cluster. The Radical SAM core domain occupies 148–380 (YPQGASSFIS…QQELTAQQLA (233 aa)). The 63-residue stretch at 383–445 (ESCVGSIMKV…ASNSLTGEVI (63 aa)) folds into the TRAM domain.

This sequence belongs to the methylthiotransferase family. MiaB subfamily. As to quaternary structure, monomer. Requires [4Fe-4S] cluster as cofactor.

Its subcellular location is the cytoplasm. It catalyses the reaction N(6)-dimethylallyladenosine(37) in tRNA + (sulfur carrier)-SH + AH2 + 2 S-adenosyl-L-methionine = 2-methylsulfanyl-N(6)-dimethylallyladenosine(37) in tRNA + (sulfur carrier)-H + 5'-deoxyadenosine + L-methionine + A + S-adenosyl-L-homocysteine + 2 H(+). Catalyzes the methylthiolation of N6-(dimethylallyl)adenosine (i(6)A), leading to the formation of 2-methylthio-N6-(dimethylallyl)adenosine (ms(2)i(6)A) at position 37 in tRNAs that read codons beginning with uridine. This chain is tRNA-2-methylthio-N(6)-dimethylallyladenosine synthase, found in Rickettsia felis (strain ATCC VR-1525 / URRWXCal2) (Rickettsia azadi).